Consider the following 263-residue polypeptide: 3-methyl-2-oxobutanoate hydroxymethyltransferase (263 aa).

D45 and D84 together coordinate Mg(2+). 3-methyl-2-oxobutanoate-binding positions include 45–46, D84, and K113; that span reads DS. E115 serves as a coordination point for Mg(2+). E182 functions as the Proton acceptor in the catalytic mechanism.

This sequence belongs to the PanB family. As to quaternary structure, homodecamer; pentamer of dimers. It depends on Mg(2+) as a cofactor.

It is found in the cytoplasm. The catalysed reaction is 3-methyl-2-oxobutanoate + (6R)-5,10-methylene-5,6,7,8-tetrahydrofolate + H2O = 2-dehydropantoate + (6S)-5,6,7,8-tetrahydrofolate. It participates in cofactor biosynthesis; coenzyme A biosynthesis. In terms of biological role, catalyzes the reversible reaction in which hydroxymethyl group from 5,10-methylenetetrahydrofolate is transferred onto alpha-ketoisovalerate to form ketopantoate. The polypeptide is 3-methyl-2-oxobutanoate hydroxymethyltransferase (Ignicoccus hospitalis (strain KIN4/I / DSM 18386 / JCM 14125)).